Consider the following 556-residue polypeptide: ATP synthase subunit beta-2, mitochondrial (556 aa).

Residues 1–20 (MASRRVLSSLLRSSSGRSAA) are compositionally biased toward low complexity. Residues 1–37 (MASRRVLSSLLRSSSGRSAAKLVNRNPRLPSPSPARH) form a disordered region. The N-terminal 51 residues, 1–51 (MASRRVLSSLLRSSSGRSAAKLVNRNPRLPSPSPARHAAPCSYLLGRVAEY), are a transit peptide targeting the mitochondrion. The residue at position 59 (Ser-59) is a Phosphoserine. 231-238 (GGAGVGKT) provides a ligand contact to ATP.

It belongs to the ATPase alpha/beta chains family. In terms of assembly, F-type ATPases have 2 components, CF(1) - the catalytic core - and CF(0) - the membrane proton channel. CF(1) has five subunits: alpha(3), beta(3), gamma(1), delta(1), epsilon(1). CF(0) has three main subunits: a, b and c.

It is found in the mitochondrion. The protein resides in the mitochondrion inner membrane. The enzyme catalyses ATP + H2O + 4 H(+)(in) = ADP + phosphate + 5 H(+)(out). Functionally, mitochondrial membrane ATP synthase (F(1)F(0) ATP synthase or Complex V) produces ATP from ADP in the presence of a proton gradient across the membrane which is generated by electron transport complexes of the respiratory chain. F-type ATPases consist of two structural domains, F(1) - containing the extramembraneous catalytic core, and F(0) - containing the membrane proton channel, linked together by a central stalk and a peripheral stalk. During catalysis, ATP synthesis in the catalytic domain of F(1) is coupled via a rotary mechanism of the central stalk subunits to proton translocation. Subunits alpha and beta form the catalytic core in F(1). Rotation of the central stalk against the surrounding alpha(3)beta(3) subunits leads to hydrolysis of ATP in three separate catalytic sites on the beta subunits. The sequence is that of ATP synthase subunit beta-2, mitochondrial from Arabidopsis thaliana (Mouse-ear cress).